The chain runs to 558 residues: uncharacterized protein (558 aa).

A coiled-coil region spans residues 47-78; sequence DFDDLNSIFKDFQKQKKNLKDNILKFYNKKKE. Disordered regions lie at residues 239–266 and 424–447; these read NNNN…SKIE and NNNN…NSGE. Positions 245 to 266 are enriched in basic and acidic residues; it reads TETESEIESKSESESESESKIE. The segment covering 424–444 has biased composition (low complexity); it reads NNNNNNNNNNNNNNNNNNNNN.

This is an uncharacterized protein from Dictyostelium discoideum (Social amoeba).